The primary structure comprises 238 residues: Ribonuclease PH (238 aa).

Residues R86 and 124–126 (GTR) each bind phosphate.

This sequence belongs to the RNase PH family. In terms of assembly, homohexameric ring arranged as a trimer of dimers.

The enzyme catalyses tRNA(n+1) + phosphate = tRNA(n) + a ribonucleoside 5'-diphosphate. Its function is as follows. Phosphorolytic 3'-5' exoribonuclease that plays an important role in tRNA 3'-end maturation. Removes nucleotide residues following the 3'-CCA terminus of tRNAs; can also add nucleotides to the ends of RNA molecules by using nucleoside diphosphates as substrates, but this may not be physiologically important. Probably plays a role in initiation of 16S rRNA degradation (leading to ribosome degradation) during starvation. In Histophilus somni (strain 129Pt) (Haemophilus somnus), this protein is Ribonuclease PH.